Here is a 475-residue protein sequence, read N- to C-terminus: BTB/POZ domain-containing protein 10 (475 aa).

The tract at residues 1–144 (MAGRPHPYDS…SQSSSDGSCK (144 aa)) is disordered. Residues 22-31 (LHSRPRKLYK) are compositionally biased toward basic residues. Over residues 57 to 80 (GHERSRDRRRSSDRSRDSSHERAE) the composition is skewed to basic and acidic residues. Residues 81–94 (SQLTPCIRNVTSPT) are compositionally biased toward polar residues. Basic and acidic residues predominate over residues 97 to 107 (HHIEREKDHSS). A compositionally biased stretch (low complexity) spans 108–144 (SRPSSPRPQRASPNGSMSSAGNSSRNSSQSSSDGSCK). An interaction with AKT family members region spans residues 146–475 (SGEMVFVYEN…LDPDAQNPML (330 aa)). Positions 167 to 241 (ERVTLIVDNT…YKTGIIRCPD (75 aa)) constitute a BTB domain. Positions 451-475 (ELDILPSHPASGNNDLDPDAQNPML) are disordered.

Interacts (via C-terminal 330-amino-acid region) with AKT1; AKT2 and AKT3. Interacts with PPP2CA and PPP1CA. In terms of tissue distribution, ubiquitously expressed (at protein level).

Its subcellular location is the nucleus. It localises to the cytoplasm. In terms of biological role, plays a major role as an activator of AKT family members by inhibiting PPP2CA-mediated dephosphorylation, thereby keeping AKTs activated. Plays a role in preventing motor neuronal death and in accelerating the growth of pancreatic beta cells. The sequence is that of BTB/POZ domain-containing protein 10 (Btbd10) from Mus musculus (Mouse).